The chain runs to 233 residues: ATP synthase subunit a 2 (233 aa).

A run of 5 helical transmembrane segments spans residues 15–35 (FVVI…LVIG), 78–98 (YLAF…LTVV), 107–127 (SLST…IYGI), 169–189 (IMSG…FVPV), and 194–214 (LGLV…LVYI).

Belongs to the ATPase A chain family. F-type ATPases have 2 components, CF(1) - the catalytic core - and CF(0) - the membrane proton channel. CF(1) has five subunits: alpha(3), beta(3), gamma(1), delta(1), epsilon(1). CF(0) has four main subunits: a, b, b' and c.

The protein localises to the cellular thylakoid membrane. Key component of the proton channel; it plays a direct role in the translocation of protons across the membrane. The chain is ATP synthase subunit a 2 from Picosynechococcus sp. (strain ATCC 27264 / PCC 7002 / PR-6) (Agmenellum quadruplicatum).